We begin with the raw amino-acid sequence, 562 residues long: Bacillolysin (562 aa).

Residues 1-24 form the signal peptide; sequence MKKKKQALKVLLSVGILSSSFAFA. A propeptide spans 25-245 (activation peptide); it reads HTSSAAPNNV…KQAAKPAAKP (221 aa). Residues Asp303, Asp305, and Asp384 each coordinate Ca(2+). A Zn(2+)-binding site is contributed by His388. Residue Glu389 is part of the active site. The Zn(2+) site is built by His392 and Glu412. Residues Glu423, Asn429, Asp431, Glu433, Glu436, Tyr439, Thr440, and Asp446 each coordinate Ca(2+). His477 functions as the Proton donor in the catalytic mechanism.

The protein belongs to the peptidase M4 family. Ca(2+) serves as cofactor. Zn(2+) is required as a cofactor.

It localises to the secreted. The catalysed reaction is Similar, but not identical, to that of thermolysin.. Extracellular zinc metalloprotease. In Priestia megaterium (strain DSM 319 / IMG 1521) (Bacillus megaterium), this protein is Bacillolysin (nprM).